Consider the following 102-residue polypeptide: Nucleoid-associated protein WS1681 (102 aa).

It belongs to the YbaB/EbfC family. In terms of assembly, homodimer.

It localises to the cytoplasm. The protein localises to the nucleoid. Its function is as follows. Binds to DNA and alters its conformation. May be involved in regulation of gene expression, nucleoid organization and DNA protection. The polypeptide is Nucleoid-associated protein WS1681 (Wolinella succinogenes (strain ATCC 29543 / DSM 1740 / CCUG 13145 / JCM 31913 / LMG 7466 / NCTC 11488 / FDC 602W) (Vibrio succinogenes)).